Here is a 713-residue protein sequence, read N- to C-terminus: Cyclomaltodextrin glucanotransferase (713 aa).

Positions 1–27 are cleaved as a signal peptide; the sequence is MKKQVKWLTSVSMSVGIALGAALPVWA. An A1 region spans residues 28–165; the sequence is SPDTSVNNKL…NIKVVMDFAP (138 aa). Positions 54, 56, 59, 60, 78, and 80 each coordinate Ca(2+). Substrate is bound at residue 127–128; it reads YW. Asn166 contributes to the Ca(2+) binding site. The tract at residues 166-229 is b; the sequence is NHTNPASSTD…NLYDLADINQ (64 aa). Position 167 (His167) interacts with substrate. Ca(2+) is bound at residue Ile217. Substrate is bound at residue 220–223; that stretch reads NLYD. Ca(2+) is bound at residue Asp226. An A2 region spans residues 230–434; sequence NNNTIDSYLK…LRKSNPALAY (205 aa). Arg254 is a binding site for substrate. Asp256 (nucleophile) is an active-site residue. Substrate is bound at residue 259 to 260; sequence KH. His260 provides a ligand contact to Ca(2+). Residue Glu285 is the Proton donor of the active site. 3 residues coordinate substrate: His355, Asp399, and Arg403. The segment at 435 to 522 is c; sequence GSTTQRWVNS…GTAVWQYTTT (88 aa). A d region spans residues 523–609; sequence ESSPIIGNVG…SAAFNNFNVL (87 aa). Residues 526-606 form the IPT/TIG domain; it reads PIIGNVGPTM…GTTSAAFNNF (81 aa). In terms of domain architecture, CBM20 spans 608 to 713; that stretch reads VLTADQVTVR…VATVTVDWQN (106 aa). Residues 610 to 713 are e; sequence TADQVTVRFK…VATVTVDWQN (104 aa).

Belongs to the glycosyl hydrolase 13 family. In terms of assembly, monomer. Requires Ca(2+) as cofactor.

Its subcellular location is the secreted. The enzyme catalyses Cyclizes part of a (1-&gt;4)-alpha-D-glucan chain by formation of a (1-&gt;4)-alpha-D-glucosidic bond.. The protein is Cyclomaltodextrin glucanotransferase of Paenibacillus macerans (Bacillus macerans).